Here is a 362-residue protein sequence, read N- to C-terminus: Ferredoxin--NADP reductase, leaf isozyme 1, chloroplastic (362 aa).

The N-terminal 36 residues, 1-36, are a transit peptide targeting the chloroplast; it reads MAAVTAAAVSTSAAAAVTKASPSPAHCFLPCPPRTR. Residues 83-205 form the FAD-binding FR-type domain; the sequence is KEPYVGKCLL…TGPVGKEMLM (123 aa). FAD-binding positions include 141–144, 162–164, Y168, 179–181, and T220; these read RLYS, CVK, and VCS. 2 residues coordinate NADP(+): S144 and K164. C180 and C185 are disulfide-bonded. Position 181 is a phosphoserine (S181). NADP(+) is bound by residues T220, 252-253, 282-283, K292, 321-322, and E360; these read VP, SR, and GL.

Belongs to the ferredoxin--NADP reductase type 1 family. Heterodimer with LFNR2. Component of high molecular weight thylakoid LFNRs-containing protein complexes containing LIR1, LFNR1, LFNR2, TIC62 and TROL proteins. Interacts directly with LFNR1 and LFNR2; LIR1 increases the affinity of LFNR1 and LFNR2 for TIC62 and subsequent thylakoid relocalization. FAD serves as cofactor. May form interchain disulfide bonds with LIR1.

Its subcellular location is the plastid. The protein localises to the chloroplast stroma. The protein resides in the chloroplast thylakoid membrane. The enzyme catalyses 2 reduced [2Fe-2S]-[ferredoxin] + NADP(+) + H(+) = 2 oxidized [2Fe-2S]-[ferredoxin] + NADPH. Its pathway is energy metabolism; photosynthesis. Its function is as follows. Plays a key role in regulating the relative amounts of cyclic and non-cyclic electron flow to meet the demands of the plant for ATP and reducing power. This Oryza sativa subsp. indica (Rice) protein is Ferredoxin--NADP reductase, leaf isozyme 1, chloroplastic.